A 432-amino-acid polypeptide reads, in one-letter code: D-amino acid dehydrogenase (432 aa).

Position 3–17 (3–17) interacts with FAD; sequence VVILGSGVVGVASAW.

The protein belongs to the DadA oxidoreductase family. The cofactor is FAD.

The enzyme catalyses a D-alpha-amino acid + A + H2O = a 2-oxocarboxylate + AH2 + NH4(+). It participates in amino-acid degradation; D-alanine degradation; NH(3) and pyruvate from D-alanine: step 1/1. Functionally, oxidative deamination of D-amino acids. In Escherichia coli O45:K1 (strain S88 / ExPEC), this protein is D-amino acid dehydrogenase.